The following is a 146-amino-acid chain: Decarboxylase dmxR15 (146 aa).

An EthD domain is found at 31–126 (PGMSEGDYRN…MHDHEVFADT (96 aa)).

This sequence belongs to the tpcK family.

The catalysed reaction is atrochrysone carboxylate + H(+) = atrochrysone + CO2. The protein operates within secondary metabolite biosynthesis. Functionally, decarboxylase; part of the gene cluster that mediates the biosynthesis of the dimeric xanthones cryptosporioptides. The pathway begins with the synthesis of atrochrysone thioester by the polyketide synthase dmx-nrPKS. The atrochrysone carboxyl ACP thioesterase dmxR1 then breaks the thioester bond and releases the atrochrysone carboxylic acid from dmx-nrPKS. Atrochrysone carboxylic acid is decarboxylated by the decarboxylase dmxR15, and oxidized by the anthrone oxygenase dmxR16 to yield emodin. Emodin is then reduced to emodin hydroquinone by the oxidoreductase dmxR7. A-ring reduction by the short chain dehydrogenase dmxR18, dehydration by the scytalone dehydratase-like protein dmxR17 and probable spontaneous re-oxidation, results in overall deoxygenation to chrysophanol. Baeyer-Villiger oxidation by the Baeyer-Villiger monooxygenase (BVMO) dmxR6 then yields monodictylactone in equilibrium with monodictyphenone. In the case of the cryptosporioptides biosynthesis, monodictylactone is reduced at C-12 to an alcohol (by the short chain dehydrogenases dmxR12 or dmxR8) and hydroxylated at C-5 by dmxR9, yielding the electron-rich aromatic which could eliminate H(2)O to form the ortho-quinonemethide, followed by tautomerisation to paraquinone and complete the formal reduction to produce the 10-methylgroup. Conjugate addition of C-4a-OH to the resulting paraquinone by the monooxygenase dmxR10 then gives cyclohexadienone, which is then reduced at C-5 by the short chain dehydrogenase dmxR3 to give the dihydroxanthone. The 6,7-epoxide in the cryptosporioptides could be introduced by the cytochrome P450 monooxygenase dmxL3. The highly reducing PKS dmxL2 manufactures butyrate, which is further carboxylated by dmxL1 to form ethylmalonate. It is not yet clear whether the carboxylation occurs while the butyrate is attached to the ACP of dmxL2, but this unusual fungal metabolite could then be esterified to O-5 by the O-acetyltransferase dmxR13. Finally, dimerization performed by dmxR5 gives the observed dimers cryptosporioptides A, B and C as the final products of the pathway. In Cryptosporiopsis sp. (strain 8999), this protein is Decarboxylase dmxR15.